Reading from the N-terminus, the 257-residue chain is Pyridoxine 5'-phosphate synthase (257 aa).

Asn16 contributes to the 3-amino-2-oxopropyl phosphate binding site. A 1-deoxy-D-xylulose 5-phosphate-binding site is contributed by 18–19 (DH). Arg27 is a 3-amino-2-oxopropyl phosphate binding site. His52 functions as the Proton acceptor in the catalytic mechanism. 1-deoxy-D-xylulose 5-phosphate is bound by residues Arg54 and His59. Glu79 functions as the Proton acceptor in the catalytic mechanism. A 1-deoxy-D-xylulose 5-phosphate-binding site is contributed by Thr109. His200 serves as the catalytic Proton donor. 3-amino-2-oxopropyl phosphate contacts are provided by residues Gly201 and 222 to 223 (GH).

The protein belongs to the PNP synthase family. Homooctamer; tetramer of dimers.

It localises to the cytoplasm. It carries out the reaction 3-amino-2-oxopropyl phosphate + 1-deoxy-D-xylulose 5-phosphate = pyridoxine 5'-phosphate + phosphate + 2 H2O + H(+). It participates in cofactor biosynthesis; pyridoxine 5'-phosphate biosynthesis; pyridoxine 5'-phosphate from D-erythrose 4-phosphate: step 5/5. Functionally, catalyzes the complicated ring closure reaction between the two acyclic compounds 1-deoxy-D-xylulose-5-phosphate (DXP) and 3-amino-2-oxopropyl phosphate (1-amino-acetone-3-phosphate or AAP) to form pyridoxine 5'-phosphate (PNP) and inorganic phosphate. The protein is Pyridoxine 5'-phosphate synthase of Burkholderia pseudomallei (strain K96243).